A 165-amino-acid polypeptide reads, in one-letter code: MANPNKRIMNKKSKQASISSILNFFFFYIMEYFVAVDNETPLGVFTSIEQCEETMKQYPGLHYVVFKYTCPADAENTDVVYLIPSLTLHTPMFVDHCPNRTKQARHVLKKINLVFEEESIENWKVSVNTVFPHVHNRLSAPKFSIDEANEAVEKFLIQAGRLMSL.

A helical membrane pass occupies residues 16 to 36 (ASISSILNFFFFYIMEYFVAV).

Belongs to the asfivirus F165R family.

It is found in the host membrane. This is an uncharacterized protein from African swine fever virus (strain Badajoz 1971 Vero-adapted) (Ba71V).